The following is a 367-amino-acid chain: tRNA-specific 2-thiouridylase MnmA (367 aa).

ATP contacts are provided by residues 11–18 (GLSGGVDS) and Leu-37. The active-site Nucleophile is Cys-99. An intrachain disulfide couples Cys-99 to Cys-195. Gly-123 is a binding site for ATP. Residues 145 to 147 (KDQ) are interaction with tRNA. Cys-195 (cysteine persulfide intermediate) is an active-site residue. An interaction with tRNA region spans residues 304-305 (RY).

The protein belongs to the MnmA/TRMU family.

The protein localises to the cytoplasm. It catalyses the reaction S-sulfanyl-L-cysteinyl-[protein] + uridine(34) in tRNA + AH2 + ATP = 2-thiouridine(34) in tRNA + L-cysteinyl-[protein] + A + AMP + diphosphate + H(+). In terms of biological role, catalyzes the 2-thiolation of uridine at the wobble position (U34) of tRNA, leading to the formation of s(2)U34. In Chlorobium luteolum (strain DSM 273 / BCRC 81028 / 2530) (Pelodictyon luteolum), this protein is tRNA-specific 2-thiouridylase MnmA.